Reading from the N-terminus, the 316-residue chain is 4-hydroxy-3-methylbut-2-enyl diphosphate reductase (316 aa).

[4Fe-4S] cluster is bound at residue Cys12. (2E)-4-hydroxy-3-methylbut-2-enyl diphosphate is bound by residues His41 and His74. Residues His41 and His74 each coordinate dimethylallyl diphosphate. Positions 41 and 74 each coordinate isopentenyl diphosphate. Position 96 (Cys96) interacts with [4Fe-4S] cluster. His124 lines the (2E)-4-hydroxy-3-methylbut-2-enyl diphosphate pocket. His124 contributes to the dimethylallyl diphosphate binding site. Residue His124 coordinates isopentenyl diphosphate. Glu126 serves as the catalytic Proton donor. Position 165 (Thr165) interacts with (2E)-4-hydroxy-3-methylbut-2-enyl diphosphate. Residue Cys195 coordinates [4Fe-4S] cluster. (2E)-4-hydroxy-3-methylbut-2-enyl diphosphate-binding residues include Ser223, Ser224, Asn225, and Ser267. Positions 223, 224, 225, and 267 each coordinate dimethylallyl diphosphate. Isopentenyl diphosphate contacts are provided by Ser223, Ser224, Asn225, and Ser267.

Belongs to the IspH family. [4Fe-4S] cluster is required as a cofactor.

The enzyme catalyses isopentenyl diphosphate + 2 oxidized [2Fe-2S]-[ferredoxin] + H2O = (2E)-4-hydroxy-3-methylbut-2-enyl diphosphate + 2 reduced [2Fe-2S]-[ferredoxin] + 2 H(+). It catalyses the reaction dimethylallyl diphosphate + 2 oxidized [2Fe-2S]-[ferredoxin] + H2O = (2E)-4-hydroxy-3-methylbut-2-enyl diphosphate + 2 reduced [2Fe-2S]-[ferredoxin] + 2 H(+). Its pathway is isoprenoid biosynthesis; dimethylallyl diphosphate biosynthesis; dimethylallyl diphosphate from (2E)-4-hydroxy-3-methylbutenyl diphosphate: step 1/1. The protein operates within isoprenoid biosynthesis; isopentenyl diphosphate biosynthesis via DXP pathway; isopentenyl diphosphate from 1-deoxy-D-xylulose 5-phosphate: step 6/6. Functionally, catalyzes the conversion of 1-hydroxy-2-methyl-2-(E)-butenyl 4-diphosphate (HMBPP) into a mixture of isopentenyl diphosphate (IPP) and dimethylallyl diphosphate (DMAPP). Acts in the terminal step of the DOXP/MEP pathway for isoprenoid precursor biosynthesis. This Acidithiobacillus ferrooxidans (strain ATCC 53993 / BNL-5-31) (Leptospirillum ferrooxidans (ATCC 53993)) protein is 4-hydroxy-3-methylbut-2-enyl diphosphate reductase.